The following is a 268-amino-acid chain: Type III pantothenate kinase 1 (268 aa).

6–13 (DIGNTNIT) is a binding site for ATP. Substrate-binding positions include tyrosine 100 and 107 to 110 (GTDR). The active-site Proton acceptor is aspartate 109. Residue aspartate 133 participates in K(+) binding. Threonine 136 provides a ligand contact to ATP.

The protein belongs to the type III pantothenate kinase family. As to quaternary structure, homodimer. The cofactor is NH4(+). K(+) serves as cofactor.

The protein resides in the cytoplasm. It carries out the reaction (R)-pantothenate + ATP = (R)-4'-phosphopantothenate + ADP + H(+). It functions in the pathway cofactor biosynthesis; coenzyme A biosynthesis; CoA from (R)-pantothenate: step 1/5. Its function is as follows. Catalyzes the phosphorylation of pantothenate (Pan), the first step in CoA biosynthesis. This chain is Type III pantothenate kinase 1, found in Symbiobacterium thermophilum (strain DSM 24528 / JCM 14929 / IAM 14863 / T).